A 570-amino-acid polypeptide reads, in one-letter code: Peptidyl-prolyl cis-trans isomerase-like 2 (570 aa).

The 74-residue stretch at 37–110 (KRLPFNFCSL…GDYVDPVTYK (74 aa)) folds into the U-box domain. Disordered stretches follow at residues 215–253 (RSER…KPTP), 428–449 (STTL…PTPD), and 469–570 (KKAE…SSWD). Positions 234–248 (STTTSTQSKTASFQS) are enriched in low complexity. The PPIase cyclophilin-type domain maps to 298-457 (QKGYARISTT…PDIRITDVTI (160 aa)). A compositionally biased stretch (polar residues) spans 428–446 (STTLNNLETHPVNSSTNRP). The span at 469–483 (KKAEEASGKNKKVDP) shows a compositional bias: basic and acidic residues. Composition is skewed to acidic residues over residues 484–497 (TEED…DDDQ) and 535–550 (QEED…EPEP).

The protein belongs to the cyclophilin-type PPIase family. PPIL2 subfamily.

The protein resides in the nucleus. The enzyme catalyses [protein]-peptidylproline (omega=180) = [protein]-peptidylproline (omega=0). It catalyses the reaction S-ubiquitinyl-[E2 ubiquitin-conjugating enzyme]-L-cysteine + [acceptor protein]-L-lysine = [E2 ubiquitin-conjugating enzyme]-L-cysteine + N(6)-ubiquitinyl-[acceptor protein]-L-lysine.. In terms of biological role, may catalyze the cis-trans isomerization of proline imidic peptide bonds in oligopeptides thereby assisting the folding of proteins. May also function as a chaperone, playing a role in intracellular transport of proteins. May also have a protein ubiquitin ligase activity acting as an E3 ubiquitin protein ligase or as a ubiquitin-ubiquitin ligase promoting elongation of ubiquitin chains on proteins. This Aspergillus oryzae (strain ATCC 42149 / RIB 40) (Yellow koji mold) protein is Peptidyl-prolyl cis-trans isomerase-like 2 (cyp8).